The primary structure comprises 139 residues: Nucleoside diphosphate kinase (139 aa).

Residues lysine 10, phenylalanine 58, arginine 86, threonine 92, arginine 103, and asparagine 113 each contribute to the ATP site. The active-site Pros-phosphohistidine intermediate is histidine 116.

It belongs to the NDK family. In terms of assembly, homotetramer. Mg(2+) serves as cofactor.

It is found in the cytoplasm. It carries out the reaction a 2'-deoxyribonucleoside 5'-diphosphate + ATP = a 2'-deoxyribonucleoside 5'-triphosphate + ADP. The enzyme catalyses a ribonucleoside 5'-diphosphate + ATP = a ribonucleoside 5'-triphosphate + ADP. In terms of biological role, major role in the synthesis of nucleoside triphosphates other than ATP. The ATP gamma phosphate is transferred to the NDP beta phosphate via a ping-pong mechanism, using a phosphorylated active-site intermediate. This Phenylobacterium zucineum (strain HLK1) protein is Nucleoside diphosphate kinase.